Reading from the N-terminus, the 152-residue chain is MIIGVLNGPNLNLLGTREPAVYGTATLADIMAHLEGVAGALGVQLRTAQSNSEGALIDILHDWRGVVDGVVVNAGAYTHTSLALRDAFTATAIPFIEVHLSNIHAREPERRHSMLASASIGMICGLGADGYEFGLRGLVRALELKRQSTATG.

Tyrosine 22 (proton acceptor) is an active-site residue. The substrate site is built by asparagine 73, histidine 79, and aspartate 86. The active-site Proton donor is the histidine 99. Substrate contacts are provided by residues 100 to 101 (LS) and arginine 110.

This sequence belongs to the type-II 3-dehydroquinase family. In terms of assembly, homododecamer.

It catalyses the reaction 3-dehydroquinate = 3-dehydroshikimate + H2O. It participates in metabolic intermediate biosynthesis; chorismate biosynthesis; chorismate from D-erythrose 4-phosphate and phosphoenolpyruvate: step 3/7. Catalyzes a trans-dehydration via an enolate intermediate. This chain is 3-dehydroquinate dehydratase, found in Gemmatimonas aurantiaca (strain DSM 14586 / JCM 11422 / NBRC 100505 / T-27).